The following is a 62-amino-acid chain: DNA-directed RNA polymerase subunit Rpo10 (62 aa).

Zn(2+)-binding residues include Cys6, Cys9, Cys43, and Cys44.

The protein belongs to the archaeal Rpo10/eukaryotic RPB10 RNA polymerase subunit family. In terms of assembly, part of the RNA polymerase complex. Zn(2+) is required as a cofactor.

The protein resides in the cytoplasm. The catalysed reaction is RNA(n) + a ribonucleoside 5'-triphosphate = RNA(n+1) + diphosphate. Functionally, DNA-dependent RNA polymerase (RNAP) catalyzes the transcription of DNA into RNA using the four ribonucleoside triphosphates as substrates. This is DNA-directed RNA polymerase subunit Rpo10 from Methanosarcina barkeri (strain Fusaro / DSM 804).